The sequence spans 554 residues: Arginine--tRNA ligase (554 aa).

The short motif at 132–142 (ANPTGPLHIGH) is the 'HIGH' region element.

This sequence belongs to the class-I aminoacyl-tRNA synthetase family. As to quaternary structure, monomer.

Its subcellular location is the cytoplasm. It carries out the reaction tRNA(Arg) + L-arginine + ATP = L-arginyl-tRNA(Arg) + AMP + diphosphate. The protein is Arginine--tRNA ligase of Pseudarthrobacter chlorophenolicus (strain ATCC 700700 / DSM 12829 / CIP 107037 / JCM 12360 / KCTC 9906 / NCIMB 13794 / A6) (Arthrobacter chlorophenolicus).